The chain runs to 115 residues: Class I hydrophobin C (115 aa).

Residues 1 to 19 form the signal peptide; sequence MFSRVLVAALVALPVLVSA. Disulfide bonds link cysteine 36-cysteine 93, cysteine 43-cysteine 87, cysteine 44-cysteine 74, and cysteine 94-cysteine 108.

Belongs to the fungal hydrophobin family. Self-assembles to form functional amyloid fibrils called rodlets. Self-assembly into fibrillar rodlets occurs spontaneously at hydrophobic:hydrophilic interfaces and the rodlets further associate laterally to form amphipathic monolayers.

The protein localises to the secreted. It is found in the cell wall. Functionally, aerial growth, conidiation, and dispersal of filamentous fungi in the environment rely upon a capability of their secreting small amphipathic proteins called hydrophobins (HPBs) with low sequence identity. Class I can self-assemble into an outermost layer of rodlet bundles on aerial cell surfaces, conferring cellular hydrophobicity that supports fungal growth, development and dispersal; whereas Class II form highly ordered films at water-air interfaces through intermolecular interactions but contribute nothing to the rodlet structure. This chain is Class I hydrophobin C, found in Agaricus bisporus (White button mushroom).